We begin with the raw amino-acid sequence, 349 residues long: tRNA pseudouridine synthase D (349 aa).

Position 27 (F27) interacts with substrate. Catalysis depends on D80, which acts as the Nucleophile. N129 is a binding site for substrate. A TRUD domain is found at 155-303 (GVPNYFGAQR…VEAARRAMLL (149 aa)). F329 contacts substrate.

It belongs to the pseudouridine synthase TruD family.

The catalysed reaction is uridine(13) in tRNA = pseudouridine(13) in tRNA. Its function is as follows. Responsible for synthesis of pseudouridine from uracil-13 in transfer RNAs. The polypeptide is tRNA pseudouridine synthase D (Escherichia coli (strain 55989 / EAEC)).